A 166-amino-acid chain; its full sequence is UPF0260 protein GbCGDNIH1_2046 (166 aa).

A disordered region spans residues 147–166; sequence RFPRPRRPRQEPAGKTADES. The span at 154 to 166 shows a compositional bias: basic and acidic residues; that stretch reads PRQEPAGKTADES.

This sequence belongs to the UPF0260 family.

The chain is UPF0260 protein GbCGDNIH1_2046 from Granulibacter bethesdensis (strain ATCC BAA-1260 / CGDNIH1).